Consider the following 402-residue polypeptide: Glutamyl-tRNA reductase (402 aa).

Residues 48–51, S91, 96–98, and Q102 each bind substrate; these read TCNR and EDQ. C49 (nucleophile) is an active-site residue. An NADP(+)-binding site is contributed by 171–176; the sequence is GAGKMG.

Belongs to the glutamyl-tRNA reductase family. As to quaternary structure, homodimer.

It carries out the reaction (S)-4-amino-5-oxopentanoate + tRNA(Glu) + NADP(+) = L-glutamyl-tRNA(Glu) + NADPH + H(+). Its pathway is porphyrin-containing compound metabolism; protoporphyrin-IX biosynthesis; 5-aminolevulinate from L-glutamyl-tRNA(Glu): step 1/2. Functionally, catalyzes the NADPH-dependent reduction of glutamyl-tRNA(Glu) to glutamate 1-semialdehyde (GSA). This chain is Glutamyl-tRNA reductase, found in Methanothermobacter thermautotrophicus (strain ATCC 29096 / DSM 1053 / JCM 10044 / NBRC 100330 / Delta H) (Methanobacterium thermoautotrophicum).